A 184-amino-acid polypeptide reads, in one-letter code: UPF0397 protein SAOUHSC_03020 (184 aa).

Helical transmembrane passes span 11–31 (VVAI…VVIP), 44–64 (AFLA…TGLV), 77–97 (AWWS…WIGL), 116–136 (IGQI…LDIL), and 148–168 (QGVI…TILL).

It belongs to the UPF0397 family.

The protein localises to the cell membrane. This chain is UPF0397 protein SAOUHSC_03020, found in Staphylococcus aureus (strain NCTC 8325 / PS 47).